The following is a 284-amino-acid chain: Nucleotide-binding protein NGK_0463 (284 aa).

ATP is bound at residue 8 to 15 (GLSGSGKS). Residue 58 to 61 (DVRS) participates in GTP binding.

This sequence belongs to the RapZ-like family.

In terms of biological role, displays ATPase and GTPase activities. The polypeptide is Nucleotide-binding protein NGK_0463 (Neisseria gonorrhoeae (strain NCCP11945)).